The primary structure comprises 269 residues: Imidazoleglycerol-phosphate dehydratase 2, chloroplastic (269 aa).

The transit peptide at 1–51 directs the protein to the chloroplast; the sequence is MTTAPFLFPSLSRLHSARASSFPKPPVGSGAGVAFPARPYGSSLRLRSSVM. Substrate contacts are provided by residues Glu83, 109–117, 135–139, Arg161, and Arg183; these read HMLDQLASH and HHSNE. Positions 109, 135, 136, and 139 each coordinate Mn(2+). Positions 207, 231, 232, and 235 each coordinate Mn(2+). Residues 231 to 239 and 261 to 263 contribute to the substrate site; these read HHIIEATFK and SSK.

The protein belongs to the imidazoleglycerol-phosphate dehydratase family. The cofactor is Mn(2+).

The protein resides in the plastid. It localises to the chloroplast. The catalysed reaction is D-erythro-1-(imidazol-4-yl)glycerol 3-phosphate = 3-(imidazol-4-yl)-2-oxopropyl phosphate + H2O. Its pathway is amino-acid biosynthesis; L-histidine biosynthesis; L-histidine from 5-phospho-alpha-D-ribose 1-diphosphate: step 6/9. In Triticum aestivum (Wheat), this protein is Imidazoleglycerol-phosphate dehydratase 2, chloroplastic.